A 188-amino-acid polypeptide reads, in one-letter code: Shikimate kinase (188 aa).

21-26 (GAGKTT) contributes to the ATP binding site. Position 25 (Thr-25) interacts with Mg(2+). Residues Asp-43, Arg-67, and Gly-90 each contribute to the substrate site. ATP is bound at residue Arg-130. Arg-148 provides a ligand contact to substrate.

Belongs to the shikimate kinase family. Monomer. It depends on Mg(2+) as a cofactor.

It localises to the cytoplasm. It carries out the reaction shikimate + ATP = 3-phosphoshikimate + ADP + H(+). It participates in metabolic intermediate biosynthesis; chorismate biosynthesis; chorismate from D-erythrose 4-phosphate and phosphoenolpyruvate: step 5/7. In terms of biological role, catalyzes the specific phosphorylation of the 3-hydroxyl group of shikimic acid using ATP as a cosubstrate. This is Shikimate kinase from Geobacillus thermodenitrificans (strain NG80-2).